The sequence spans 168 residues: Disulfide bond formation protein B 2 (168 aa).

The Cytoplasmic portion of the chain corresponds to 1-14 (MSAPIGATRAERWT). Residues 15–31 (LLAIGVASFELVAGALW) traverse the membrane as a helical segment. At 32-49 (IQLAWQEDPCPLCIIQRY) the chain is on the periplasmic side. Cysteine 41 and cysteine 44 form a disulfide bridge. Residues 50–64 (LFLLIALFTFVAAAG) form a helical membrane-spanning segment. Residues 65–69 (GRRVA) lie on the Cytoplasmic side of the membrane. Residues 70–87 (LLRVLSLTTALAGAAVAV) traverse the membrane as a helical segment. Residues 88 to 142 (RHIYVQAHPGFSCGFDALQPVIDSLPPAHWLPPVFKVGGLCETLYPPILGLSLPM) lie on the Periplasmic side of the membrane. Residues cysteine 100 and cysteine 128 are joined by a disulfide bond. A helical membrane pass occupies residues 143 to 161 (WALVGFSAIAVALGWRIRA). Residues 162 to 168 (QAVIRTA) lie on the Cytoplasmic side of the membrane.

This sequence belongs to the DsbB family.

The protein localises to the cell inner membrane. Required for disulfide bond formation in some periplasmic proteins. Acts by oxidizing the DsbA protein. The chain is Disulfide bond formation protein B 2 from Burkholderia lata (strain ATCC 17760 / DSM 23089 / LMG 22485 / NCIMB 9086 / R18194 / 383).